Here is a 1969-residue protein sequence, read N- to C-terminus: TP53-binding protein 1 (1969 aa).

The disordered stretch occupies residues 1-24; that stretch reads MPGEQMDPTGSQLDSDFSQQDTPC. The span at 8–22 shows a compositional bias: polar residues; it reads PTGSQLDSDFSQQDT. A phosphoserine mark is found at Ser30, Ser68, and Ser73. A disordered region spans residues 67 to 168; the sequence is VSNPEQSAVE…DSLAAEDSAS (102 aa). The segment covering 69 to 85 has biased composition (polar residues); that stretch reads NPEQSAVEQGDSNSSFN. Residues 86-95 show a composition bias toward basic and acidic residues; sequence EHLKEKKASD. The segment covering 101 to 110 has biased composition (polar residues); the sequence is HLGTSGSISQ. Ser109 carries the phosphoserine modification. A compositionally biased stretch (acidic residues) spans 135-148; sequence PEEEKEEEELEEEK. Low complexity predominate over residues 158–168; that stretch reads ADSLAAEDSAS. A phosphoserine mark is found at Ser169, Ser179, and Ser181. Lys220 is covalently cross-linked (Glycyl lysine isopeptide (Lys-Gly) (interchain with G-Cter in SUMO1); alternate). Residue Lys220 forms a Glycyl lysine isopeptide (Lys-Gly) (interchain with G-Cter in SUMO2); alternate linkage. Disordered regions lie at residues 254-337, 352-599, and 614-707; these read EQNL…VSTP, LVQE…CKGR, and DSGS…CPEA. Phosphoserine is present on residues Ser267 and Ser268. Residues 277 to 288 show a composition bias toward basic and acidic residues; that stretch reads ETKEQVPARELL. The span at 294 to 324 shows a compositional bias: polar residues; sequence VQPSSEPEVSSTQEDLFDQSSKTASDGCSTP. Residue Ser297 is modified to Phosphoserine. The residue at position 305 (Thr305) is a Phosphothreonine. Phosphoserine occurs at positions 368, 382, and 397. Residues 407-419 are compositionally biased toward basic and acidic residues; the sequence is QKLHDDEAMETEK. The span at 426–442 shows a compositional bias: polar residues; that stretch reads PAVSPQASTPVSRSTPV. Phosphoserine occurs at positions 429, 452, and 464. Polar residues predominate over residues 481-490; it reads HSSSLTVECS. A compositionally biased stretch (basic and acidic residues) spans 491 to 501; sequence KTSESEPKNFT. A phosphoserine mark is found at Ser507, Ser518, Ser523, and Ser525. Polar residues predominate over residues 517–528; sequence LSTSEYSQSSKM. Thr543 and Thr548 each carry phosphothreonine. Residues Ser552 and Ser579 each carry the phosphoserine modification. The span at 566-582 shows a compositional bias: polar residues; the sequence is VLVTPSQDDQVEMSQNV. Residues 583–599 are compositionally biased toward basic and acidic residues; that stretch reads DKAKEDETEDRGDCKGR. Polar residues predominate over residues 614–634; sequence DSGSQAVPSPATRSEALSSVL. 4 positions are modified to phosphoserine: Ser622, Ser627, Ser631, and Ser632. Over residues 640–649 the composition is skewed to basic and acidic residues; sequence MDTKEHHPEE. Thr662 bears the Phosphothreonine mark. Basic and acidic residues predominate over residues 666–675; the sequence is SHREEPKEEP. A phosphoserine mark is found at Ser684, Ser716, Ser719, and Ser763. Residues 754–870 are disordered; it reads KEPSPRADVS…DDKQLGPEGA (117 aa). Residues 790 to 818 show a composition bias toward basic and acidic residues; the sequence is AENRLDTPEEKRIECDGDSKAETTEKDAV. The residue at position 822 (Ser822) is a Phosphoserine. Positions 830-839 are enriched in basic and acidic residues; the sequence is VRDEPVRPDQ. Phosphothreonine is present on Thr912. Residue Lys920 forms a Glycyl lysine isopeptide (Lys-Gly) (interchain with G-Cter in SUMO2) linkage. Residues 927–1017 form a disordered region; that stretch reads STPIGISNYP…GSTAIAEPVA (91 aa). Over residues 935–949 the composition is skewed to polar residues; that stretch reads YPESTIATSDVTSES. Residues 961–975 are compositionally biased toward basic and acidic residues; that stretch reads EKGDSESAPEMDGKL. Ser965 is modified (phosphoserine). Lys974 is covalently cross-linked (Glycyl lysine isopeptide (Lys-Gly) (interchain with G-Cter in SUMO2)). Ser1018 bears the Phosphoserine mark. Disordered stretches follow at residues 1034-1144, 1178-1231, and 1267-1478; these read QEKE…MDRP, GTST…PHGH, and TEET…DSSS. Basic and acidic residues predominate over residues 1060-1074; sequence EEDKERPDVTPKLRQ. A phosphoserine mark is found at Ser1075 and Ser1096. The segment covering 1099-1112 has biased composition (low complexity); the sequence is SQQRASQEQRASQE. At Ser1115 the chain carries Phosphoserine. Positions 1178-1197 are enriched in polar residues; it reads GTSTAEQNSGKQDATVQTER. Phosphothreonine is present on Thr1211. Phosphoserine is present on residues Ser1213 and Ser1216. The segment covering 1269–1282 has biased composition (acidic residues); it reads ETEEPIVECQECET. The segment covering 1295–1326 has biased composition (low complexity); that stretch reads DLGDISSFSSKASSSHHTSSGTSLSAIHSSGS. The residue at position 1314 (Ser1314) is a Phosphoserine. Arg1329 is modified (omega-N-methylarginine). Ser1339 is subject to Phosphoserine. At Arg1352 the chain carries Omega-N-methylarginine. Ser1359 is modified (phosphoserine). A Glycyl lysine isopeptide (Lys-Gly) (interchain with G-Cter in SUMO2) cross-link involves residue Lys1362. Phosphoserine is present on Ser1365. Residues 1393-1400 carry the GAR motif; it reads RGRGRRGR. Phosphoserine occurs at positions 1423 and 1427. A Glycyl lysine isopeptide (Lys-Gly) (interchain with G-Cter in SUMO1); alternate cross-link involves residue Lys1431. Lys1431 is covalently cross-linked (Glycyl lysine isopeptide (Lys-Gly) (interchain with G-Cter in SUMO2); alternate). Ser1457, Ser1459, Ser1470, and Ser1471 each carry phosphoserine. Over residues 1469–1478 the composition is skewed to low complexity; it reads GSSDGLDSSS. The interval 1481 to 1600 is tudor-like; it reads NSFVGLRVVA…NRLREQYGLG (120 aa). The tract at residues 1492–1520 is interaction with dimethylated histone H4; the sequence is WSSNGYFYSGKITRDVGAGKYKLLFDDGY. A Glycyl lysine isopeptide (Lys-Gly) (interchain with G-Cter in SUMO1); alternate cross-link involves residue Lys1560. Lys1560 is covalently cross-linked (Glycyl lysine isopeptide (Lys-Gly) (interchain with G-Cter in SUMO2); alternate). The UDR signature appears at 1601–1628; it reads PYEAVTPLTKAADISLDNLVEGKRKRRS. A Phosphothreonine modification is found at Thr1606. A phosphoserine mark is found at Ser1615, Ser1628, and Ser1632. Residues 1624–1715 are disordered; sequence RKRRSNISSP…IGEPSVLEEP (92 aa). Over residues 1631–1648 the composition is skewed to low complexity; it reads SSPVTPTAASSSSTTPTR. Phosphothreonine occurs at positions 1635 and 1645. A phosphoserine mark is found at Ser1653, Ser1670, and Ser1675. Lys1682 participates in a covalent cross-link: Glycyl lysine isopeptide (Lys-Gly) (interchain with G-Cter in ubiquitin). Phosphoserine occurs at positions 1698 and 1756. 2 consecutive BRCT domains span residues 1749 to 1845 and 1861 to 1961; these read LDGP…NYLL and PREN…QHPK.

As to quaternary structure, homoligomer. Interacts with p53/TP53 (via the central domain). Interacts with DCLRE1C. Interacts with histone H2AX and this requires phosphorylation of H2AX on 'Ser-139'. Interacts with histone H4 that has been dimethylated at 'Lys-20' (H4K20me2). Has low affinity for histone H4 containing monomethylated 'Lys-20' (H4K20me1). Does not bind histone H4 containing unmethylated or trimethylated 'Lys-20' (H4K20me3). Has low affinity for histone H3 that has been dimethylated on 'Lys-79'. Has very low affinity for histone H3 that has been monomethylated on 'Lys-79' (in vitro). Does not bind unmethylated histone H3. Interacts with histone H2A monoubiquitinated at 'Lys-15' (H2AK15Ub). Interacts with PWWP3A/EXPAND1. Interacts with CHEK2; modulates CHEK2 phosphorylation at 'Thr-68' in response to infrared. Interacts with MSL1; this interaction may be required for MSL1 DNA repair activity, but not for histone acetyltransferase activity. Interacts (when phosphorylated by ATM) with RIF1. Interacts (via the Tudor-like domain) with NUDT16L1/TIRR; interaction masks the Tudor-like domain and prevents recruitment to chromatin. Interacts with PAXIP1. Interacts with IFI202A. Interacts with SHLD2. Interacts (when phosphorylated) with TOPBP1. Interacts with GFI1; promoting methylation by PRMT1. Interacts with (phosphorylated) DYNLL1; specifically binds DYNLL1 phosphorylated at 'Ser-88' and promotes its recruitment to double stand breaks (DSBs). Phosphorylated at basal level in the absence of DNA damage. Phosphorylated by ATM in response to DNA damage: phosphorylation at different sites promotes interaction with different set of proteins: phosphorylation at the N-terminus by ATM (residues from 11-181) promotes interaction with PAXIP1 and non-homologous end joining (NHEJ) of dysfunctional telomeres. Phosphorylation by ATM at residues that are located more C-terminus (residues 300-650) leads to promote interaction with RIF1. Interaction with RIF1 leads to disrupt interaction with NUDT16L1/TIRR. Phosphorylation at Thr-1606 and Ser-1615 in the UDR motif blocks interaction with H2AK15ub. Dephosphorylated by PPP4C. Hyperphosphorylation during mitosis correlates with its exclusion from chromatin and DNA lesions. Hyperphosphorylated in an ATR-dependent manner in response to DNA damage induced by UV irradiation. Dephosphorylated by PPP5C. Phosphorylation at Ser-368 and Thr-662 promotes interaction with TOPBP1. Phosphorylated by VRK1. In terms of processing, asymmetrically dimethylated on Arg residues by PRMT1. Methylation is required for DNA binding. Post-translationally, monoubiquitinated at Lys-1682 by MSL2 is reponse to DNA damage, leading to its stabilization.

Its subcellular location is the nucleus. It is found in the chromosome. It localises to the centromere. The protein resides in the kinetochore. Its function is as follows. Double-strand break (DSB) repair protein involved in response to DNA damage, telomere dynamics and class-switch recombination (CSR) during antibody genesis. Plays a key role in the repair of double-strand DNA breaks (DSBs) in response to DNA damage by promoting non-homologous end joining (NHEJ)-mediated repair of DSBs and specifically counteracting the function of the homologous recombination (HR) repair protein BRCA1. In response to DSBs, phosphorylation by ATM promotes interaction with RIF1 and dissociation from NUDT16L1/TIRR, leading to recruitment to DSBs sites. Recruited to DSBs sites by recognizing and binding histone H2A monoubiquitinated at 'Lys-15' (H2AK15Ub) and histone H4 dimethylated at 'Lys-20' (H4K20me2), two histone marks that are present at DSBs sites. Required for immunoglobulin class-switch recombination (CSR) during antibody genesis, a process that involves the generation of DNA DSBs. Participates in the repair and the orientation of the broken DNA ends during CSR. In contrast, it is not required for classic NHEJ and V(D)J recombination. Promotes NHEJ of dysfunctional telomeres. In Mus musculus (Mouse), this protein is TP53-binding protein 1.